A 417-amino-acid polypeptide reads, in one-letter code: Tyrosine--tRNA ligase (417 aa).

Tyr39 contributes to the L-tyrosine binding site. The short motif at 44–53 (PTASSLHAGS) is the 'HIGH' region element. L-tyrosine contacts are provided by Tyr176 and Gln180. Residues 236-240 (KMGKS) carry the 'KMSKS' region motif. ATP is bound at residue Lys239. Positions 350 to 417 (TGLLILLVQA…KKKHVLIKPL (68 aa)) constitute an S4 RNA-binding domain.

It belongs to the class-I aminoacyl-tRNA synthetase family. TyrS type 1 subfamily. In terms of assembly, homodimer.

The protein localises to the cytoplasm. It catalyses the reaction tRNA(Tyr) + L-tyrosine + ATP = L-tyrosyl-tRNA(Tyr) + AMP + diphosphate + H(+). Functionally, catalyzes the attachment of tyrosine to tRNA(Tyr) in a two-step reaction: tyrosine is first activated by ATP to form Tyr-AMP and then transferred to the acceptor end of tRNA(Tyr). This is Tyrosine--tRNA ligase from Bartonella henselae (strain ATCC 49882 / DSM 28221 / CCUG 30454 / Houston 1) (Rochalimaea henselae).